The chain runs to 68 residues: Large ribosomal subunit protein bL35 (68 aa).

Belongs to the bacterial ribosomal protein bL35 family.

The chain is Large ribosomal subunit protein bL35 from Pelagibacter ubique (strain HTCC1062).